Reading from the N-terminus, the 157-residue chain is Probable succinate transporter subunit YjjB (157 aa).

4 helical membrane-spanning segments follow: residues 8-28, 50-70, 87-107, and 129-149; these read LALA…AMVF, MILM…SMLV, VFTV…TAMI, and FLTA…PGLW.

Belongs to the ThrE exporter (TC 2.A.79) family. As to quaternary structure, the transporter is composed of YjjB and YjjP.

It is found in the cell inner membrane. Its function is as follows. Involved in succinate export with YjjP. Both proteins are required for export. The chain is Probable succinate transporter subunit YjjB from Escherichia coli O1:K1 / APEC.